Here is a 435-residue protein sequence, read N- to C-terminus: Xylose isomerase (435 aa).

Residues His-99 and Asp-102 contribute to the active site. Residues Glu-230, Glu-266, His-269, Asp-294, Asp-305, Asp-307, and Asp-337 each contribute to the Mg(2+) site.

It belongs to the xylose isomerase family. Homotetramer. Mg(2+) serves as cofactor.

It localises to the cytoplasm. The catalysed reaction is alpha-D-xylose = alpha-D-xylulofuranose. This Tetragenococcus halophilus (Pediococcus halophilus) protein is Xylose isomerase (xylA).